Here is a 220-residue protein sequence, read N- to C-terminus: Ribosome maturation factor RimP (220 aa).

The disordered stretch occupies residues 173-220 (KKDKEERRQRKKARRRGEKGGVGDDGTAGEEQPDSAREGPARSASEGE).

This sequence belongs to the RimP family.

The protein resides in the cytoplasm. Functionally, required for maturation of 30S ribosomal subunits. The chain is Ribosome maturation factor RimP from Chelativorans sp. (strain BNC1).